The chain runs to 440 residues: MSTFSQTVPELVAWARKNDFSIQLPVDRLAFLLAIATLNGERLDGEMSEGELVDAFRHVSDAFEQSTETVAQRANNAINDMVRQRLLNRFTSEQAEGNAIYRLTPLGIGITDYYIRQREFSTLRLSMQLSIVASELKRAADAAQEGGDEFHWHRNVYAPLKYSVAEIFDSIDLTQRIMDEQQQLVKDDIAQLLNKDWRAAISSCELLLSETSGTLRELQDTLEAAGDKLQANLLQIQEATLGRDDLHFVDRLTYDLQSKLDRIISWGQQAIDLWIGYDRHVHKFIRTAIDMDKNRVFAQRLRQSVQNYFDAPWALTYASADRLLDMRDEEMTLRDEEVTGELPPDLEFEEFNEIREQLAAMIEAQLNVYRERQQPLDLSVVMRDYLTQFPRARHFDVARIVVDQAVRLGVAEADFTGLPAKWQPINDYGAKVQANVIDKY.

Positions Leu208–Ile236 are leucine-zipper.

The protein belongs to the MukF family. Interacts, and probably forms a ternary complex, with MukE and MukB via its C-terminal region. The complex formation is stimulated by calcium or magnesium. It is required for an interaction between MukE and MukB.

Its subcellular location is the cytoplasm. It is found in the nucleoid. Involved in chromosome condensation, segregation and cell cycle progression. May participate in facilitating chromosome segregation by condensation DNA from both sides of a centrally located replisome during cell division. Not required for mini-F plasmid partitioning. Probably acts via its interaction with MukB and MukE. Overexpression results in anucleate cells. It has a calcium binding activity. This chain is Chromosome partition protein MukF, found in Cronobacter sakazakii (strain ATCC BAA-894) (Enterobacter sakazakii).